Consider the following 310-residue polypeptide: Probable manganese-dependent inorganic pyrophosphatase (310 aa).

Positions 9, 13, 15, 75, 97, and 149 each coordinate Mn(2+).

It belongs to the PPase class C family. The cofactor is Mn(2+).

It localises to the cytoplasm. It catalyses the reaction diphosphate + H2O = 2 phosphate + H(+). This Brevibacillus brevis (strain 47 / JCM 6285 / NBRC 100599) protein is Probable manganese-dependent inorganic pyrophosphatase.